We begin with the raw amino-acid sequence, 357 residues long: Inositol-tetrakisphosphate 1-kinase 3 (357 aa).

Residues K56 and K98 each contribute to the 1D-myo-inositol 1,3,4-trisphosphate site. ATP-binding residues include R133 and K183. H190 and K222 together coordinate 1D-myo-inositol 1,3,4-trisphosphate. ATP is bound by residues 211-222, S237, and S262; that span reads QEFVNHGGVLFK. 3 residues coordinate Mg(2+): D302, D317, and N319. Position 319 (N319) interacts with 1D-myo-inositol 1,3,4-trisphosphate.

The protein belongs to the ITPK1 family. As to quaternary structure, monomer. Mg(2+) serves as cofactor.

The catalysed reaction is 1D-myo-inositol 3,4,5,6-tetrakisphosphate + ATP = 1D-myo-inositol 1,3,4,5,6-pentakisphosphate + ADP + H(+). The enzyme catalyses 1D-myo-inositol 1,3,4-trisphosphate + ATP = 1D-myo-inositol 1,3,4,5-tetrakisphosphate + ADP + H(+). It carries out the reaction 1D-myo-inositol 1,3,4-trisphosphate + ATP = 1D-myo-inositol 1,3,4,6-tetrakisphosphate + ADP + H(+). Functionally, kinase that can phosphorylate various inositol polyphosphate such as Ins(3,4,5,6)P4 or Ins(1,3,4)P3 and participates in phytic acid biosynthesis in developing seeds. Phytic acid is the primary storage form of phosphorus in cereal grains and other plant seeds. This Oryza sativa subsp. indica (Rice) protein is Inositol-tetrakisphosphate 1-kinase 3 (ITPK3).